The sequence spans 246 residues: 4-hydroxy-tetrahydrodipicolinate reductase (246 aa).

NAD(+) contacts are provided by residues 8–13, 74–76, and 101–104; these read GAKGRM, GTT, and APNF. The active-site Proton donor/acceptor is the His-131. His-132 contributes to the (S)-2,3,4,5-tetrahydrodipicolinate binding site. The active-site Proton donor is the Lys-135. 141–142 contributes to the (S)-2,3,4,5-tetrahydrodipicolinate binding site; sequence GT.

The protein belongs to the DapB family.

The protein resides in the cytoplasm. The catalysed reaction is (S)-2,3,4,5-tetrahydrodipicolinate + NAD(+) + H2O = (2S,4S)-4-hydroxy-2,3,4,5-tetrahydrodipicolinate + NADH + H(+). It carries out the reaction (S)-2,3,4,5-tetrahydrodipicolinate + NADP(+) + H2O = (2S,4S)-4-hydroxy-2,3,4,5-tetrahydrodipicolinate + NADPH + H(+). The protein operates within amino-acid biosynthesis; L-lysine biosynthesis via DAP pathway; (S)-tetrahydrodipicolinate from L-aspartate: step 4/4. Its function is as follows. Catalyzes the conversion of 4-hydroxy-tetrahydrodipicolinate (HTPA) to tetrahydrodipicolinate. The protein is 4-hydroxy-tetrahydrodipicolinate reductase of Cutibacterium acnes (strain DSM 16379 / KPA171202) (Propionibacterium acnes).